A 102-amino-acid chain; its full sequence is Small ribosomal subunit protein uS10 (102 aa).

Belongs to the universal ribosomal protein uS10 family. As to quaternary structure, part of the 30S ribosomal subunit.

Functionally, involved in the binding of tRNA to the ribosomes. The protein is Small ribosomal subunit protein uS10 of Streptococcus pyogenes serotype M12 (strain MGAS2096).